Reading from the N-terminus, the 309-residue chain is Malate dehydrogenase (309 aa).

NAD(+)-binding positions include 9–14 (GAGFVG) and Asp-33. Substrate-binding residues include Arg-82 and Arg-88. Residues Asn-95 and 118 to 120 (VNN) contribute to the NAD(+) site. Substrate is bound by residues Asn-120 and Arg-151. Catalysis depends on His-175, which acts as the Proton acceptor.

Belongs to the LDH/MDH superfamily. MDH type 3 family.

It carries out the reaction (S)-malate + NAD(+) = oxaloacetate + NADH + H(+). Its function is as follows. Catalyzes the reversible oxidation of malate to oxaloacetate. In Chloroflexus aurantiacus (strain ATCC 29364 / DSM 637 / Y-400-fl), this protein is Malate dehydrogenase.